We begin with the raw amino-acid sequence, 541 residues long: Molybdate transporter 1 (541 aa).

5 helical membrane passes run 24–44, 58–78, 98–118, 137–157, and 168–188; these read LLLSEISGSLGDLGTLLPLLL, LLFSGLFNILTGLVFGVPLPV, TVAAGAWVGFAVLLLGGTGGL, AGMSLVVAAGGGMVRPLGWLW, and GLGEWLDSRALAVLAFGGLVV. The tract at residues 193-213 is disordered; that stretch reads QQQQQQQSGEKPQERRKKRSK. 2 helical membrane passes run 214–234 and 287–307; these read MPVQVPYALVLFLVGIMFAVV and MAIAQLPLTTLNSIIAASALA. The segment at 317–366 is disordered; sequence PQLYADDESSDSPLSPSPSASSSSLSSAPPQTPSAETPKPLSSPTSAEEG. Low complexity predominate over residues 327-351; sequence DSPLSPSPSASSSSLSSAPPQTPSA. Transmembrane regions (helical) follow at residues 413 to 433 and 435 to 455; these read IILLGLTKFLLGLFFPGPGLL and LLGKFPKAFLGVMVLGAGVEL. A disordered region spans residues 510–541; that stretch reads TEKGRGGEQGLLGEEEEEEEQGRVDEESPLLR.

The protein belongs to the SLC26A/SulP transporter (TC 2.A.53) family.

Its subcellular location is the vacuole membrane. Exports stored molybdate from the vacuole into the cytosol, making it available for molybdate cofactor (Moco) biosynthesis. Plays a role in molybdate homeostasis as high cytosolic levels of molybdate are toxic to cells. Not required for molybdate import into cells. This is Molybdate transporter 1 from Neurospora crassa (strain ATCC 24698 / 74-OR23-1A / CBS 708.71 / DSM 1257 / FGSC 987).